Here is a 489-residue protein sequence, read N- to C-terminus: Ammonium transporter Rh type C (489 aa).

Residues 1–21 (MGNCADCLRGFFCPPKNTNIR) lie on the Cytoplasmic side of the membrane. A helical membrane pass occupies residues 22 to 42 (ISLPAVCFVWQIAMIVLFGVF). The Extracellular portion of the chain corresponds to 43–75 (IRYDAESDIRLWLQLKHTNNITSDIENDFYFRY). The N-linked (GlcNAc...) asparagine glycan is linked to asparagine 62. The helical transmembrane segment at 76 to 96 (PSFQDVHVMIFVGFGFLMTFL) threads the bilayer. The Cytoplasmic segment spans residues 97–100 (KRYS). A helical membrane pass occupies residues 101–121 (FGGVGFNFLIGAFGLQWALLM). Over 122 to 140 (QGWFHALDPTTGKISIGVE) the chain is Extracellular. The helical transmembrane segment at 141-161 (GLINADFCVAASLIAYGALLG) threads the bilayer. The Cytoplasmic portion of the chain corresponds to 162-169 (KVSPVQLM). The chain crosses the membrane as a helical span at residues 170-190 (VVTLFGVTLFAVEEYIILNLL). Residues 191 to 195 (HCRDA) are Extracellular-facing. The helical transmembrane segment at 196 to 216 (GGSMVIHCFGGYYGLTISWIL) threads the bilayer. The Cytoplasmic portion of the chain corresponds to 217-235 (YRPKLHQSKRLNGSVYHSD). Residues 236-256 (VFAMIGTLFLWMFWPSFNSAI) traverse the membrane as a helical segment. Residues 257 to 266 (TDHGSGQHRT) lie on the Extracellular side of the membrane. Residues 267-287 (AINTYIALASSVLTTVAISSA) traverse the membrane as a helical segment. Residues 288-298 (SEKRGKLDMVH) are Cytoplasmic-facing. Residues 299-319 (IQNATLAGGVAMGTAAEFMIT) form a helical membrane-spanning segment. Proline 320 is a topological domain (extracellular). The helical transmembrane segment at 321-341 (YGALIVGFCTGIISTFGYLFV) threads the bilayer. Over 342 to 359 (SPFMEKYLKIQDTCGVHN) the chain is Cytoplasmic. The chain crosses the membrane as a helical span at residues 360 to 380 (LHAMPGMLGGFIGAIVAAAAT). Topologically, residues 381–412 (EEVYSREGLIETFDFEGKFADRTVGTQGGFQA) are extracellular. A helical transmembrane segment spans residues 413–433 (AGVCVAIAFAVVGGAVVGLIL). Residues 434–489 (RLPIWGDPADDNCFDDEVYWEVPEDEEGILPVLEYNNHMTHKHQDISESNFSVEQS) lie on the Cytoplasmic side of the membrane.

The protein belongs to the ammonium transporter (TC 2.A.49) family. Rh subfamily. In terms of assembly, homotrimer.

Its subcellular location is the apical cell membrane. Functionally, functions as an ammonia transporter. May play a role in the elimination of ammonia in the gill. The protein is Ammonium transporter Rh type C (rhcg) of Gasterosteus aculeatus (Three-spined stickleback).